The sequence spans 468 residues: Ribosomal protein uS12 methylthiotransferase RimO (468 aa).

The 112-residue stretch at 18–129 (PTVAFAHLGC…IVEVLERVEA (112 aa)) folds into the MTTase N-terminal domain. 6 residues coordinate [4Fe-4S] cluster: C27, C63, C92, C167, C171, and C174. One can recognise a Radical SAM core domain in the interval 153–382 (TTGEAVAYLK…MTLQQPISAA (230 aa)). Positions 385 to 456 (ARWVGRTVDA…IYDLRAEIVG (72 aa)) constitute a TRAM domain.

Belongs to the methylthiotransferase family. RimO subfamily. It depends on [4Fe-4S] cluster as a cofactor.

It is found in the cytoplasm. The catalysed reaction is L-aspartate(89)-[ribosomal protein uS12]-hydrogen + (sulfur carrier)-SH + AH2 + 2 S-adenosyl-L-methionine = 3-methylsulfanyl-L-aspartate(89)-[ribosomal protein uS12]-hydrogen + (sulfur carrier)-H + 5'-deoxyadenosine + L-methionine + A + S-adenosyl-L-homocysteine + 2 H(+). Functionally, catalyzes the methylthiolation of an aspartic acid residue of ribosomal protein uS12. This chain is Ribosomal protein uS12 methylthiotransferase RimO, found in Synechococcus sp. (strain WH7803).